We begin with the raw amino-acid sequence, 214 residues long: Ribonuclease HII (214 aa).

Residues 26–214 enclose the RNase H type-2 domain; that stretch reads EIVCGVDEAG…PVRAALDLIR (189 aa). Aspartate 32, glutamate 33, and aspartate 124 together coordinate a divalent metal cation.

Belongs to the RNase HII family. It depends on Mn(2+) as a cofactor. Mg(2+) is required as a cofactor.

The protein resides in the cytoplasm. The enzyme catalyses Endonucleolytic cleavage to 5'-phosphomonoester.. In terms of biological role, endonuclease that specifically degrades the RNA of RNA-DNA hybrids. This is Ribonuclease HII from Burkholderia cenocepacia (strain HI2424).